Here is a 433-residue protein sequence, read N- to C-terminus: Epi-neemfruitin B synthase L1AT (433 aa).

Active-site proton acceptor residues include His151 and Asp372.

This sequence belongs to the plant acyltransferase family. As to quaternary structure, monomer. Mainly expressed in petioles and, to a lower extent, in roots.

It catalyses the reaction (21S)-21-acetyl-1-hydroxy-apo-melianone + acetyl-CoA = epi-neemfruitin B + acetate + CoA + H(+). Its pathway is secondary metabolite biosynthesis; terpenoid biosynthesis. Its function is as follows. Acetyltransferase involved in the biosynthesis of limonoids triterpene natural products such as azadirachtin, an antifeedant widely used as bioinsecticide, and possessing many medicinal applications including anti-tumoral, anti-malarial, anti-rheumatic, antibacterial, anti-inflammatory, anti-pyretic and diuretic effects. Catalyzes the formation of epi-neemfruitin B from (21S)-21-acetyl-1-hydroxy-apo-melianone. This chain is Epi-neemfruitin B synthase L1AT, found in Melia azedarach (Chinaberry tree).